A 6733-amino-acid polypeptide reads, in one-letter code: MSKTSRELTNETELHLCSSTLDLISKSQLLAQCLGTPQNLVSLSKMVPSILESPTLEPRYTSTHSSSLQSLQLLALNTSSTLYKWTTGSISKLRGHLERELCRGLVPLNDFIPKGNYVELSLMIPSVLTGQGTSTTTTLQEMCSDMVQSCIKSMETDLLKGVLALKDQTSCQEYFLSANYQSLIPPQPLVNAMRMSSVVDLSPLILENTRLLLKLSPFHGGTSVSYTSMIREFVDCSRRDEKCLKRRLTKKQKRQEEGSFDANKVITLGGKMYRYRVVILKCSDEVDDLIGFDGKVGEFDYNFENVPHCWRDLVKRRCLIRAKATWNLAGGVDENLDHVYIDESQXDFRCADGSSDSPSACVEDPHLEERIFSRVWLKQTSRFFGTKIQQVSELFKSIGLPELETTYCGVNPVKVGNKWLSFRDQGRSRVFFVYTDSNVYLATTRQKVCCDYILTKFKSVKWIGNKPDQCRVVKVLAWLISVNKVKNCTRVITPMLTVQGKISHRRVDYLDISVLDSYVSDTAGLNCVQKVKKFLSMYYNCGADLGLLDNFLTPIECGTKQLVFERCNCPNHQFYVAQFDNHVVLGLGRPTGVVYPEEIPSCANIYAVGFATQKRVVEVHYYSEMDRHQLPQDYYYFAYDQEFQHVGGDDYVNHHLDDVEDQPFPPVLFDDVYDSGDSLDDGGSDLDCFDVGYDFFWPEAPIPVPSPYGYYQGQRLRDLCVAGGDFGCDCPRCDGTFIYHPFRPRHYHSFDEVGPFIQMCEFTLTYSGQNYNLFYGLEPKVCLQDLVEASDKLLQLLVRGQLENISLPNDILACLSSLKLGANIHPFLWPAPFFNANGEWVDIFGGGDFTVFGEDFCLKAKSMVESVYFLVENFFSVDCPIGNLYCNLHLDGDVKKMLWSTIHMKYIYLALIHSEKVFNIILNSRQLSHQELVKLVIIGTFDVSIVAPCACSGDCNHGKVYNWTNLLSSVYRFVTLDQLVGLSYCEKRSLVLRKVQQYLEVEEGYQRPVQLLMAPFYGFNDNAEPDEQPLTGVFHQQVMQMFDTCVMLDVICGLKRPRASVYNLFGVLADYFRRPFTFRYYQVAEFSGSESTQVFTDVTSALTSKDPCSNRPYIYHDYAVCRVVEPRTAAVTTRGAIYPPEVIEMIRSYLPIEFDVGVMNYVDGNCDFKYCNLEFCLSGRGLVKLDTGELLDYKTNLFVVRYKTLPLLYVTSNPIYLSDFSLDNAVCLTGDFKLSFDVEPGSTLFGLYFTNGRCYRDVWETLPRFGLGTLSPPKCHSKCEPFENLAEVFFFKRRVQLVPLVNNYTPVFRHRPDIPKVLTVELMPYYSSIGYQGFVAPKCVLPGCVATQYCKLRHQLDRCVQVTKLAVAYAFYFKPLNIGSLYHLDPMRGTSYGKPAVVQFEPVGLIKEVNILVYQFGKHVAIHYFPECPTYVAYGHYPSHSVGVWLGYLPSVEECVIAQRNYRVYVPTCFRLSRTGCYHIQQDEDFERTHITVSYHYARDFDTKSLTPMFQMFSKIFGKSKQDLICALNSLSEESQSVLTLFCEEFDSAYTLQTISDEVSFETSTSPELVACVLAYAIGYELCLTVKTDGECESLDVGSSLEQVYVDYDVSKNVWDLSTHLQDDSSDDLELPFNQYYEFKVGRASVVLVQDDFKSVYDFLKSEQGVDYVVNPANNQLKHGGGIAKVISCMCGPKLTSWSNNYIKQYKKLGVTCAIRSPGFQLGKGVQIIHVVGPKSADSDVVNKLEASWRSVFQNVKPDTTVLTSMLSTGIFGCSVTDSATTLLSNLVDLDKDVVVFVVTNVSDQYIEALGVVESFQSAHGLPNFGNTCWFNALYQLLKSFAVKEQIVQDLVNCFDDFYECPTRQCVEWVCDQLGVVFGEQYDAVEMLVKIFDVFKCNVRVGYDCLARLQQVALGSCREVPADAVLMFFGQDKSGHWVAARKVCGVWYTFDDKVVVKKDPDWSKVVLVLRERGLFKATDFETPRPRRRRVAYRVPRDTISQDAIMFLEERQFSSGTMLAHSCVESVESFHVEGVQPSPLQSVDGLDDVADLSCDNHVCDNSDLQEPQVVVSQPSEVLTTSMSIECPVLENSECSVETDLNPVCEENEQVGESGIKEQDGVTTSDSQQVFSKSLDPIIKQHEVESVEPQDLPVFSQQPQVMLSMTWRDVLFQQYLGFKSDLLSLTHVNKFKIVVYLMVLWFVLLYCFSDFSLLSRFCLYVFLLWLSHVVLVVKKLDLGLVNSGGESYVLRILSSVKVPNCIAFNCDGVHWLILKLLFYSFHFYDFFVKTLVVVFQMPQLRCFTWPLLKLGFADTFLSHHILAFPTKQVSQSCLPVFGDERKYIYVPYWCKESFRTLVARAKQLTATGRTKTLDNWHYQCCSKTVKPSSCFNVRDFVFDDACNNHKHYGFFSALWFYVVFYSGFVSFWLPLMFCYCALFMCTFKNLPVNITRPIRWTVLQQVVDDLLSIITKPLFGRPACPPLSAYLTATTADEAVRASRSLLGRFCTPVGFQQPIMNVENGVAVSSLGFINPLMWPLFIVVLLDNRFVWFFNVLSYIMLPVFVIILFYFYLRKICGCVNVKGVVKNCTRHFQNFSKPLVAAGVHGNRTNFTYQPMQENWCDRHSWYCPKEEHYMTPEMAMFIKNYYNLATSPMADTIWCDYVKSVPNMTWANFKFSLFKSNETVMCGPSSHADSMLLSWYAFLHGIRFAVNPSVIDIPSQTQPIYVSSDSDDSLDKGCDVSLRPTKNKGKFKKQSVAYFSAGPVDLWYYVMLIIALGAIFVFMYSCFMVGQYVVMPRDKFFGVNPTGYSYVNAQPYLHASPPVLRNSDGMVLATPLKVPSISYSVYRLLSGHLYFTKLIVAENECTPPFGAXRLSHEFTCNDFTYILPAHLRIFGRYIMLIHPDQLHMLPFEVEHSTHTRLCYVTGTNIVECLPTFEIISPYVFVVLVAIFTIVFLFLLRMYIVMYSYFKVFTYVVFKLLFVNTVMVLFVVCLPPLVPGVVFVLALWLCDSVVFLLYLAVLSLFILPWFYVMLFVLIVGGFVFWWMMKSSDVVHLTPDGLTFNGTFEQVSKCVFPLNPLIVNRLLLDCRMSHSDLVEKSKLKTTEGKLATEMMKVFMTGETAYYQPSNFSFQSVFSKVVSPFTLHARPPMPMFRLYVYFNGQCVGTTCTGTGFAIDDSTIVTAKHLFECDDLKPTHLSVELSCRSYWCTWKEPNVLSWKFEGENAYISVENLRDFYGIDFKYLPFQQIECEFYKRMEAVTIYSIKYGSEFATQAWQTVNGHFVCCNTEGGDSGAPLVWRDSVIGVHQGLCDSFKTTLASDSKGVMMTEVKGYHVDPPVYYKPIIMSAAYNKFVADSDVSVGECTNYHNFVNEDFFSMHDELEKVSFGDKMFRYCQSLPRYLEPLHYFHVPSFWQPFKKQSVSSNVSWVVENLHFIFSVYFLVCDFVAYWWLDDPFSVVLPLFFVVQLLSTVVLKNVLFWNTSYLVTLAVTFYVHSEVAESMYLLGLFSDQIVNRVGLILVVSVMCLFVVVRVVVNVKRAIFVVVVSVLLIVVNVVLGVVQFNSLVAVCMFDIYAVFAALLTPQPVVAIMMLILFDTKCLMSFAFVVIVLSFRVFKNYKFVRVLHNLCNFDFVLTQLSLFRYRHHNQGNNPSHYEALWLFLKELYYGVQDVKYEVFSPQAGTYNVRFLTDMTEQDQLEAVEQVQRRLQRFSIVQDKNSQRLVLYSKNVDFLRSQIQHQRVLGANPFIITTLTPKDIAIDNVEVHNPSQFKPEDLQAHMWFYSKSPIFVGQVPIPTNVQTAAVLDTTYNCQDLTADEKNNVAANLQIQNAALTLSLFEECNRFLESELGDVPTLMWQSEDVVDVKQLEVQIEKLRVVLDGMQLGTSEYKATRKQINILQSQLDKALAFERKLAKFLEKVDQQQAITNETAKQLSAFKNLVKQVYESYMSSLKVRVVESNDASCLLTSTDLPRKLVLMRPITGLDNIKIVEKANGCEITAFGDTFTTGLGSNLAGLAYSSTQPLSAYPFIFNLEGIFKQQANIGYKTVECNMSSDNGSVLYKGKIVAVPSEDNPDFVVCGKGYKLDCGINVLMIPSIVRYITLNLTDHLQRQSLKPRRRLQYKQQGVRLGGVNLGEHQAFSNELISSVGYTTWVSSTVCTDKSHKHPWFVQIPSSEKDPEWFMHNTQVKNNQWVVDAKPTHWLVDADTNEQLFALALTDEEYLKAESILAKWSPITQDVECWFKDLRGYYTVSGLQPLWPVCPKKICSLKIVPIFQSQSVAYADEPTHFLSLPVVNKNFLEAFYELQEGFPGEKQVAPHISLTMLKLTEEDVAKVEDILDEMVLPNTYATITNPHMMGQYYVFEVEGLQALHDEVVSVLRQHGIACDQTRMWKPHLTIGEIKDGSVFNKFKDFGITCKLEDCDFVKLGAPKANARYEFIATLPVGDFKLLRDVWCACRHLCFQNGAYQSSRSKHYIDLATEYNAGIVKVNKSNTHSVEYKGQRFMIKRVKDQHEFALARTAFLPSIIPHHMVHQNGEWFLVRGPTTQWSLGDLVYAIWLGDQAYLDECGFVFNPSRDEFLDDANQRSYLANLLEPAILSFCEIFHCVKGCQVPYKITLDNLDLKGQLYDFGDYPCPNKVDNQSALFVLAEVWSMTRKPFPTKFAQVLAKEMNVPADFQMYFQHTLLSGKYFDKAMCLNNVRPLLRDPANLTTTPFFSQHSGVWTHFYNPIYGLVECDLEEFSNLPEVLQQLITVQGPITSAMTPAISIGEGVYAANVPPVAAAKQKIPLYDVGLCQELTDAGVDCGEAFKYFYYLSNPAGALADVCFYDYQGTGFYSPKLLAGVYDFMKRVTTCYKTDERFTYEQAKPRKSSMGINITGYQQDAVYRALGPENITKLFEYAQKAPLPFCTKIITKFALSAKARARTVSSCSFIASTIFRFAHKPVTSKMVEVAQNSQGFCLIGVSKYGLKFSKFLKDKYGAIEQFDVFGSDYTKCDRTFPLSFRALTAALLYELGGWEEDSWLYLNEVNSYMLDTMLCDGMLLNKPGGTSSGDATTAHSNTFYNYMVHYVVAFKTILSDLSDCNKVMRIAAHNAYTTGDYGVFNTLLEEQFQTNYFLNFLSDDSFIFSKPGALKIFTCENFSNKLQTILHTKVDLTKSWATTGHIEEFCSAHIIKTDGEYHFLPSRGRLLASLLILDKLSDVDIYYMRFVAILCESAVYSRYQPEFFNGLFQVFLDKVQQFRKDYCCDPCPTQLLDRQFYENLVFTSNTEVGLVDCYLENFKLQCEFKQQAGFDRVCFCCPNPAVSVCEECYVPLPLCAYCYYVHVVISSHCKIEDKFKCPCGQDDIRELFIVLNNSICIYQCRSCVESDRLRISLLSDVDQVVRLPGFKANSASIAKNGVAQLLTPVDNVDVSLDWNHQETVQQNVARIVYHSANMTQMSIEVVYVNFSLVRNDGSSAILDIPNFKCPDTSYCLFYKPGKTGVLKFTGKGTLTSCYDSNNLTWFKVTCPDFNQPWRLATCFVIQQHDAVYPPIKSTQYENVTFVMGPPGTGKTTFVYNTYLSKASPSNRFVYCAPTHRLVGDMDEKVDGAVVVSAYNDRTYRNPVWKKDDSYDVLLCTHNTLPFIKSAVLIVDEVSLIPPHVMIKILSMGFKKVVLLGDPFQLSPVYKNHKVHFKYDTFYLLQLATQKRYLTACYRCPPQILSAFSKPYCDVGVDLVSFNNKPGKFDIIVSKQLANMQDFSVLSVLSKEYPGYVILVNYRAAVDYAMQNGLGDVTTIDSSQGTTAANHLLVLFGASNFSKTINRVIVGCSRSTTHLVVVCCPELYKHFQPILNWPEPVYRYFGMEKQSDFNIIPEVASLVFCDIEFWHYKADPNSKTRTVYPGQIAVVTSQTLQLYLGVFDDAGYKSALRGLPKDVFVPPNWVWMRKHYPSFEQHAYNMQRLFKFIIDTTCGQPWFILYSCSNDLKSLKFYVEFGTNYFCSCGELAICLMRDGLYKCRNCYGNMSISKLVNCKYLDVQKERIKLQDAHDAICQQFHGDSHEALCDAVMTKCLYLASYDAAFKDTIHVKYKDLCLEIQYKITSPYVRYDGVNKRYLYRDHGAMHYFKTPKSPMQNVYRYEVGAHTEYSINICNSYEGCQSFGKTCTKCIHIHCIVEQFMADDRYRDFILVSVVKSDFVEQALSPAAKALMLTVTRVEGKSFYTSNGQRYDLYDYDLSKSVMRVVGASVKPLPLYSVVVGLGINCTVGCVLPNVPMKLKDELLSTDVPLSTLRLDLPTWYYVTWPTLSNRTSRWKLAGAQVYDCSVHIYVEATGEQPLYYLQLGNGESLRELPETLFSTGRLYNLEHDPSKNFNVQQLAIETIPKNHHVFAGDFTDVGTDIGGVHHVVALNGYKGSIIPNYVKPIATGLINVGRSVKRTTLVDVCANQLYEKVKQQIAGVKVSKVIFVNIDFQEVQFMVFAKGEDDIQTFYPQKEFIRSYYEWPTILPELESHYDLKNYGQDPQFMPQPVNFAKYTQICTFIQEHVKVARNSLIWHVGAAGIDGCSPGDIVLSSFFKECLVYSWDVKDYDTLLEKHNYDCNFRPNLIVSDVYNVSSNVSEVLEDCVHRLALGGTIIFKTTESSRPDIQLSKVTKYFAAVHFFTAGVNTSSSEVFVVLKYKLHSEPIGEELCSPNILRRIAAYRNKLCIVPNFKVFSTSLSYRFSSVKFVQKCFYVSVPRQFCASGLIQEVPLLCQMKH.

A Macro domain is found at 1633 to 1814; it reads FNQYYEFKVG…QYIEALGVVE (182 aa). The interval 2183 to 2565 is HD1; that stretch reads LTHVNKFKIV…IMLPVFVIIL (383 aa). The next 10 membrane-spanning stretches (helical) occupy residues 2191-2211, 2219-2239, 2266-2286, 2411-2431, 2521-2541, 2546-2566, 2769-2789, 2937-2957, 2986-3006, and 3022-3042; these read IVVYLMVLWFVLLYCFSDFSL, VFLLWLSHVVLVVKKLDLGLV, GVHWLILKLLFYSFHFYDFFV, ALWFYVVFYSGFVSFWLPLMF, VAVSSLGFINPLMWPLFIVVL, FVWFFNVLSYIMLPVFVIILF, VMLIIALGAIFVFMYSCFMVG, IISPYVFVVLVAIFTIVFLFL, VLFVVCLPPLVPGVVFVLALW, and LFILPWFYVMLFVLIVGGFVF. Residues 2769–3042 form an HD2 region; that stretch reads VMLIIALGAI…FVLIVGGFVF (274 aa). Catalysis depends on charge relay system; for 3C-like serine proteinase activity residues H3184, E3222, and S3291. 7 helical membrane-spanning segments follow: residues 3422-3442, 3456-3478, 3486-3506, 3514-3534, 3538-3558, 3573-3593, and 3598-3613; these read SNVSWVVENLHFIFSVYFLVC, VVLPLFFVVQLLSTVVLKNVLFW, LAVTFYVHSEVAESMYLLGLF, VGLILVVSVMCLFVVVRVVVN, AIFVVVVSVLLIVVNVVLGVV, AVFAALLTPQPVVAIMMLILF, and LMSFAFVVIVLSFRVF. An HD3 region spans residues 3430 to 3613; it reads NLHFIFSVYF…VVIVLSFRVF (184 aa). Positions 4442–4673 constitute a NiRAN domain; the sequence is DFKLLRDVWC…AKEMNVPADF (232 aa). Residues 4981–5132 enclose the RdRp catalytic domain; sequence FDVFGSDYTK…FSKPGALKIF (152 aa). The 116-residue stretch at 5289–5404 folds into the CV ZBD domain; it reads FDRVCFCCPN…NGVAQLLTPV (116 aa). Zn(2+) contacts are provided by C5293, C5296, C5304, C5307, C5314, C5317, H5321, H5327, C5336, C5338, C5359, and C5362. The region spanning 5509–5688 is the (+)RNA virus helicase ATP-binding domain; sequence NQPWRLATCF…LQLATQKRYL (180 aa). The (+)RNA virus helicase C-terminal domain maps to 5689–5848; sequence TACYRCPPQI…FGMEKQSDFN (160 aa). Residues 5846–6059 form the ExoN domain; the sequence is DFNIIPEVAS…YLASYDAAFK (214 aa). Catalysis depends on residues D5860, E5862, and D5961. 3 residues coordinate Zn(2+): H6025, C6029, and H6033. Active-site residues include H6037 and D6042. Residue C6048 participates in Zn(2+) binding. Positions 6327-6467 constitute a NendoU domain; it reads LPETLFSTGR…GEDDIQTFYP (141 aa). Active-site residues include H6363, H6380, K6412, K6509, D6585, K6613, and E6647. Positions 6469-6733 constitute a Nidovirus-type SAM-dependent 2'-O-MTase domain; sequence KEFIRSYYEW…EVPLLCQMKH (265 aa).

Post-translationally, specific enzymatic cleavages in vivo by its own protease yield mature proteins. 3CL-PRO is autocatalytically processed.

It localises to the host membrane. The enzyme catalyses RNA(n) + a ribonucleoside 5'-triphosphate = RNA(n+1) + diphosphate. It catalyses the reaction ATP + H2O = ADP + phosphate + H(+). Its function is as follows. The 3C-like serine proteinase is responsible for the majority of cleavages. The helicase which contains a zinc finger structure displays RNA and DNA duplex-unwinding activities with 5' to 3' polarity. In terms of biological role, acts on both ssRNA and dsRNA in a 3' to 5' direction. Functionally, nendoU is a Mn(2+)-dependent, uridylate-specific enzyme, which leaves 2'-3'-cyclic phosphates 5' to the cleaved bond. This Bos taurus (Bovine) protein is Replicase polyprotein 1ab (rep).